The following is a 185-amino-acid chain: MISVNDFRTGLTIEVDGGIWRVVDFQHVKPGKGAAFVRSKLRNLRTGAIQEKTFRAGEKVARAQIETKTMQYLYANGDQHVFMDTTSYEQLELNEKQIEHELKFLLENMSVQIMMYQTETIGIELPNTVELKVVETEPGIKGDTASGGTKPAKTETGLVVNVPFFVNEGDTLVVNTSDGSYVSRA.

It belongs to the elongation factor P family.

Its subcellular location is the cytoplasm. It functions in the pathway protein biosynthesis; polypeptide chain elongation. Functionally, involved in peptide bond synthesis. Stimulates efficient translation and peptide-bond synthesis on native or reconstituted 70S ribosomes in vitro. Probably functions indirectly by altering the affinity of the ribosome for aminoacyl-tRNA, thus increasing their reactivity as acceptors for peptidyl transferase. The polypeptide is Elongation factor P (Bacillus licheniformis (strain ATCC 14580 / DSM 13 / JCM 2505 / CCUG 7422 / NBRC 12200 / NCIMB 9375 / NCTC 10341 / NRRL NRS-1264 / Gibson 46)).